Reading from the N-terminus, the 315-residue chain is tRNA dimethylallyltransferase (315 aa).

14–21 contacts ATP; that stretch reads GATATGKS. Residue 16–21 coordinates substrate; the sequence is TATGKS. The interval 39–42 is interaction with substrate tRNA; sequence DSRQ.

The protein belongs to the IPP transferase family. As to quaternary structure, monomer. Mg(2+) is required as a cofactor.

It carries out the reaction adenosine(37) in tRNA + dimethylallyl diphosphate = N(6)-dimethylallyladenosine(37) in tRNA + diphosphate. Its function is as follows. Catalyzes the transfer of a dimethylallyl group onto the adenine at position 37 in tRNAs that read codons beginning with uridine, leading to the formation of N6-(dimethylallyl)adenosine (i(6)A). This chain is tRNA dimethylallyltransferase, found in Microcystis aeruginosa (strain NIES-843 / IAM M-2473).